A 328-amino-acid polypeptide reads, in one-letter code: Urokinase plasminogen activator surface receptor (328 aa).

The signal sequence occupies residues 1 to 24 (MGLLRRRLLLLVVVVTTCVPASQG). UPAR/Ly6 domains are found at residues 25-118 (LRCI…GRYL), 118-213 (LECA…PPNG), and 214-299 (FQCY…RPTG). Disulfide bonds link Cys-27/Cys-48, Cys-30/Cys-36, and Cys-41/Cys-69. A glycan (N-linked (GlcNAc...) asparagine) is linked at Asn-76. 11 disulfide bridges follow: Cys-95/Cys-100, Cys-120/Cys-147, Cys-123/Cys-130, Cys-140/Cys-169, Cys-175/Cys-192, Cys-193/Cys-198, Cys-216/Cys-244, Cys-219/Cys-227, Cys-237/Cys-263, Cys-269/Cys-288, and Cys-289/Cys-294. Asn-184, Asn-194, Asn-222, Asn-255, Asn-283, and Asn-290 each carry an N-linked (GlcNAc...) asparagine glycan. A lipid anchor (GPI-anchor amidated glycine) is attached at Gly-299. Residues 300-328 (GAPGPGPAHLILIASLLLTLRLWGIPLWT) constitute a propeptide, removed in mature form.

Monomer. Interacts (via the UPAR/Ly6 domains) with SRPX2. Interacts with MRC2. Interacts with SORL1 (via N-terminal ectodomain); this interaction decreases PLAUR internalization. The ternary complex composed of PLAUR-PLAU-SERPINE1 also interacts with SORL1. Interacts with CD82; this interaction prevents PLAUR from binding to its high affinity ligand PLAU.

It localises to the cell membrane. Its subcellular location is the secreted. In terms of biological role, acts as a receptor for urokinase plasminogen activator. Plays a role in localizing and promoting plasmin formation. Mediates the proteolysis-independent signal transduction activation effects of U-PA. This is Urokinase plasminogen activator surface receptor (Plaur) from Rattus norvegicus (Rat).